Here is a 1807-residue protein sequence, read N- to C-terminus: MKGIVLALLLALAGSERTHIEPVFSESKISVYNYEAVILNGFPESGLSRAGIKINCKVEISAYAQRSYFLKIQSPEIKEYNGVWPKDPFTRSSKLTQALAEQLTKPARFEYSNGRVGDIFVADDVSDTVANIYRGILNLLQVTIKKSQDVYDLQESSVGGICHTRYVIQEDKRGDQIRIIKSTDFNNCQDKVSKTIGLELAEFCHSCKQLNRVIQGAATYTYKLKGRDQGTVIMEVTARQVLQVTPFAERHGAATMESRQVLAWVGSKSGQLTPPQIQLKNRGNLHYQFASELHQMPIHLMKTKSPEAQAVEVLQHLVQDTQQHIREDAPAKFLQLVQLLRASNFENLQALWKQFAQRTQYRRCLLDALPMAGTVDCLKFIKQLIHNEELTTQEAAVLITFAMRSARPGQRNFQISADLVQDSKVQKYSTVHKAAILAYGTMVRRYCDQLSSCPEHALEPLHELAAEAANKGHYEDIALALKALGNAGQPESIKRIQKFLPGFSSSADQLPVRIQTDAVMALRNIAKEDPRKVQEILLQIFMDRDVRTEVRMMACLALFETRPGLATVTAIANVAARESKTNLQLASFTFSQMKALSKSSVPHLEPLAAACSVALKILNPSLDNLGYRYSKVMRVDTFKYNLMAGAAAKVFIMNSANTMFPVFILAKFREYTSLVENDDIEIGIRGEGIEEFLRKQNIQFANFPMRKKISQIVKSLLGFKGLPSQVPLISGYIKLFGQEIAFTELNKEVIQNTIQALNQPAERHTMIRNVLNKLLNGVVGQYARRWMTWEYRHIIPTTVGLPAELSLYQSAIVHAAVNSDVKVKPTPSGDFSAAQLLESQIQLNGEVKPSVLVHTVATMGINSPLFQAGIEFHGKVHAHLPAKFTAFLDMKDRNFKIETPPFQQENHLVEIRAQTFAFTRNIADLDSARKTLVVPRNNEQNILKKHFETTGRTSAEGASMMEDSSEMGPKKYSAEPGHHQYAPNINSYDACTKFSKAGVHLCIQCKTHNAASRRNTIFYQAVGEHDFKLTMKPAHTEGAIEKLQLEITAGPKAASKIMGLVEVEGTEGEPMDETAVTKRLKMILGIDESRKDTNETALYRSKQKKKNKIHNRRLDAEVVEARKQQSSLSSSSSSSSSSSSSSSSSSSSSSSSSPSSSSSSSYSKRSKRREHNPHHQRESSSSSSQEQNKKRNLQENRKHGQKGMSSSSSSSSSSSSSSSSSSSSSSSSSSSSEENRPHKNRQHDNKQAKMQSNQHQQKKNKFSESSSSSSSSSSSEMWNKKKHHRNFYDLNFRRTARTKGTEHRGSRLSSSSESSSSSSESAYRHKAKFLGDKEPPVLVVTFKAVRNDNTKQGYQMVVYQEYHSSKQQIQAYVMDISKTRWAACFDAVVVNPHEAQASLKWGQNCQDYKINMKAETGNFGNQPALRVTANWPKIPSKWKSTGKVVGEYVPGAMYMMGFQGEYKRNSQRQVKLVFALSSPRTCDVVIRIPRLTVYYRALRLPVPIPVGHHAKENVLQTPTWNIFAEAPKLIMDSIQGECKVAQDQITTFNGVDLASALPENCYNVLAQDCSPEMKFMVLMRNSKESPNHKDINVKLGEYDIDMYYSADAFKMKINNLEVSEEHLPYKSFNYPTVEIKKKGNGVSLSASEYGIDSLDYDGLTFKFRPTIWMKGKTCGICGHNDDESEKELQMPDGSVAKDQMRFIHSWILPAESCSEGCNLKHTLVKLEKAIATDGAKAKCYSVQPVLRCAKGCSPVKTVEVSTGFHCLPSDVSLDLPEGQIRLEKSEDFSEKVEAHTACSCETSPCAA.

The first 15 residues, 1–15 (MKGIVLALLLALAGS), serve as a signal peptide directing secretion. The Vitellogenin domain occupies 24–664 (FSESKISVYN…SANTMFPVFI (641 aa)). The segment at 953–974 (TSAEGASMMEDSSEMGPKKYSA) is disordered. A glycan (N-linked (GlcNAc...) asparagine) is linked at asparagine 1094. The tract at residues 1095–1320 (ETALYRSKQK…SSESSSSSSE (226 aa)) is disordered. The span at 1101-1111 (SKQKKKNKIHN) shows a compositional bias: basic residues. Basic and acidic residues predominate over residues 1112–1123 (RRLDAEVVEARK). The span at 1126-1163 (SSLSSSSSSSSSSSSSSSSSSSSSSSSSPSSSSSSSYS) shows a compositional bias: low complexity. The segment covering 1187–1198 (QNKKRNLQENRK) has biased composition (basic and acidic residues). Low complexity predominate over residues 1205–1232 (SSSSSSSSSSSSSSSSSSSSSSSSSSSS). The span at 1233-1247 (EENRPHKNRQHDNKQ) shows a compositional bias: basic and acidic residues. Low complexity-rich tracts occupy residues 1263–1276 (SESS…SSSE) and 1309–1320 (SSSSESSSSSSE). Residues 1536 to 1714 (GECKVAQDQI…SWILPAESCS (179 aa)) enclose the VWFD domain. Cystine bridges form between cysteine 1538–cysteine 1677 and cysteine 1561–cysteine 1713.

In terms of tissue distribution, produced by the liver, secreted into the blood and then sequestered by receptor mediated endocytosis into growing oocytes, where it is generally cleaved, giving rise to the respective yolk components.

Precursor of the major egg-yolk proteins that are sources of nutrients during early development of oviparous organisms. The sequence is that of Vitellogenin-A2 from Xenopus laevis (African clawed frog).